A 592-amino-acid polypeptide reads, in one-letter code: uncharacterized protein (592 aa).

The next 6 helical transmembrane spans lie at 12–32 (IWILQTLAITSVVFSFGIFLL), 58–78 (PILFFLLIVAMTLLSVRISLV), 102–122 (MGLFCVIAASSVSAALVSYYL), 191–211 (ISYTILLWGLAGPMIVLGVEI), 214–234 (MMVFLVFGYVIFTTLIAFWLG), and 299–319 (FSGFNLVVSQISVVFPLLIQV). One can recognise an ABC transmembrane type-1 domain in the interval 58 to 358 (PILFFLLIVA…FRSTYDNFAS (301 aa)). Positions 391-592 (VIFKNLSIQN…LQDKGQWQVL (202 aa)) constitute an ABC transporter domain. ATP is bound at residue 424 to 431 (GKSGAGKT).

The protein belongs to the ABC transporter superfamily.

It is found in the cell inner membrane. This is an uncharacterized protein from Haemophilus influenzae (strain ATCC 51907 / DSM 11121 / KW20 / Rd).